Reading from the N-terminus, the 283-residue chain is Probable protein phosphatase 2C 58 (283 aa).

The PPM-type phosphatase domain maps to 35 to 282 (THGFHCVKGK…DDISCIVVKF (248 aa)). The Mn(2+) site is built by D72, G73, D234, and D273.

The protein belongs to the PP2C family. Mg(2+) serves as cofactor. Requires Mn(2+) as cofactor.

The catalysed reaction is O-phospho-L-seryl-[protein] + H2O = L-seryl-[protein] + phosphate. It catalyses the reaction O-phospho-L-threonyl-[protein] + H2O = L-threonyl-[protein] + phosphate. The polypeptide is Probable protein phosphatase 2C 58 (Arabidopsis thaliana (Mouse-ear cress)).